Consider the following 156-residue polypeptide: Small ribosomal subunit protein uS7 (156 aa).

It belongs to the universal ribosomal protein uS7 family. Part of the 30S ribosomal subunit. Contacts proteins S9 and S11.

Functionally, one of the primary rRNA binding proteins, it binds directly to 16S rRNA where it nucleates assembly of the head domain of the 30S subunit. Is located at the subunit interface close to the decoding center, probably blocks exit of the E-site tRNA. In Synechococcus sp. (strain JA-3-3Ab) (Cyanobacteria bacterium Yellowstone A-Prime), this protein is Small ribosomal subunit protein uS7.